The chain runs to 175 residues: Cytochrome c homolog (175 aa).

Residues 1–8 (MTGKELNK) are Cytoplasmic-facing. A helical; Signal-anchor transmembrane segment spans residues 9-29 (IVAAILFASLIAMIVRFVANI). Topologically, residues 30 to 175 (LYKPNLQVLN…LFLKNYVHDK (146 aa)) are periplasmic. 4 residues coordinate heme c: Cys-84, Cys-87, His-88, and Met-150.

The protein belongs to the cytochrome c family. Post-translationally, binds 1 heme c group covalently per subunit.

It localises to the cell membrane. May be involved in electron transfer from bc1 complex to aa3. The polypeptide is Cytochrome c homolog (cycM) (Rickettsia typhi (strain ATCC VR-144 / Wilmington)).